Consider the following 364-residue polypeptide: Peroxidase (364 aa).

The N-terminal stretch at 1 to 20 (MKLSLFSTFAAVIIGALALP) is a signal peptide. Gln21 carries the post-translational modification Pyrrolidone carboxylic acid. 4 disulfide bridges follow: Cys32–Cys44, Cys43–Cys313, Cys63–Cys149, and Cys277–Cys342. His76 acts as the Proton acceptor in catalysis. Asp77, Gly95, Asp97, and Ser99 together coordinate Ca(2+). N-linked (GlcNAc...) (high mannose) asparagine glycosylation occurs at Asn163. Residue His204 participates in heme b binding. Residues Ser205, Asp222, Thr224, Val227, and Asp229 each coordinate Ca(2+).

It belongs to the peroxidase family. Ligninase subfamily. The cofactor is Ca(2+). Heme b is required as a cofactor.

Its subcellular location is the secreted. It catalyses the reaction 2 a phenolic donor + H2O2 = 2 a phenolic radical donor + 2 H2O. The sequence is that of Peroxidase from Arthromyces ramosus.